A 922-amino-acid polypeptide reads, in one-letter code: MASNFLTKLFGSRNDRLLKQYRKTVARINAMEPEYEKLSDDALRAKTVEFQGRVARGESLDDLLPEAFAVGREASKRVMKMRHFDVQLLGGMALHHGKISEMRTGEGKTLTATLPVYLNALGGKGVHVVTVNDYLANRDARWMGRLYNFLGLTVGINLPQMPREEKQAAYAADITYGTNNEYGFDYLRDNMVYEARDRVQRALNFAIVDEVDSILIDEARTPLIISGQAEDHTAMYIAMNKVVPLLVRQEGEADPRTGEGVTKPGDFTIDEKSHQVFLTEQGHETAERVLAAQGLIPEGASLYDPSHITLMHHLYAALRANHLYHRDQHYVVQNGEIVIVDEFTGRLMSGRRWSEGLHQAVEAKEGVEIQAENQTLASITFQNYFRLYSKLSGMTGTADTEAYEFQEIYGLETVVIPPNRPSKRDDQLDRVYKTTREKYEAAIQDIRECHERGQPVLVGTTSIENSEIIDDLLNKAGLPHQVLNAKQHAREADIVAQAGRAGMITIATNMAGRGTDIVLGGNIEKEVAAIEDDESLDEATKQARIAALREQWAADNEKVKALGGLRIIATERHESRRIDNQLRGRSGRQGDPGSSRFYLSLDDSLMRIFAGERVRAIMERLKMPDGEAIEAGIVTRSIESAQRKVEARNFDIRKQLLEYDDVANDQRKVIYQQRNEILDAADLSGVIAGMRESCLTDIVRQYVPEESVEEQWDLAGLEKALADEWQIRLPLQQEVESAQAITDGEILEKVVAAGNAAFQAKVDMVGPENFHQFQRAVLLQSFDSNWRDHLSALDYLRQGIHLRGYAQKQPKQEYKREAFELFRQLIDQVKNEVTRILLTVQVQSPSELDQAAEALESRAEQIANVTYTAPTETGEPETLPDPRTAGAGGDGLNLPEGVRIGRNDPCPCGSGKKYKQCHGKLA.

ATP contacts are provided by residues Q87, 105–109 (GEGKT), and D516. The interval 867 to 912 (YTAPTETGEPETLPDPRTAGAGGDGLNLPEGVRIGRNDPCPCGSGK) is disordered. Zn(2+)-binding residues include C906, C908, C917, and H918.

Belongs to the SecA family. As to quaternary structure, monomer and homodimer. Part of the essential Sec protein translocation apparatus which comprises SecA, SecYEG and auxiliary proteins SecDF-YajC and YidC. Zn(2+) serves as cofactor.

The protein localises to the cell inner membrane. It localises to the cytoplasm. It carries out the reaction ATP + H2O + cellular proteinSide 1 = ADP + phosphate + cellular proteinSide 2.. Part of the Sec protein translocase complex. Interacts with the SecYEG preprotein conducting channel. Has a central role in coupling the hydrolysis of ATP to the transfer of proteins into and across the cell membrane, serving both as a receptor for the preprotein-SecB complex and as an ATP-driven molecular motor driving the stepwise translocation of polypeptide chains across the membrane. This Paracidovorax citrulli (strain AAC00-1) (Acidovorax citrulli) protein is Protein translocase subunit SecA.